The chain runs to 449 residues: Probable ubiquitin carboxyl-terminal hydrolase 8 (449 aa).

The UBP-type zinc-finger motif lies at 6–113 (EGCQHLKLKP…FKIKNIKAWQ (108 aa)). 12 residues coordinate Zn(2+): cysteine 8, histidine 10, cysteine 38, cysteine 41, cysteine 51, cysteine 54, cysteine 59, histidine 64, histidine 68, histidine 74, cysteine 87, and cysteine 90. The USP domain occupies 145-435 (RGIQNLGATC…QAYLLFYHER (291 aa)). Cysteine 154 acts as the Nucleophile in catalysis. Positions 178, 183, 188, 191, 246, 257, 259, 262, 275, 278, 317, and 320 each coordinate Zn(2+). Histidine 395 acts as the Proton acceptor in catalysis.

Belongs to the peptidase C19 family. UBP8 subfamily. In terms of assembly, component of the 1.8 MDa SAGA (Spt-Ada-Gcn5 acetyltransferase) complex, which is composed of 19 subunits tra1, spt7, taf5, ngg1/ada3, sgf73, spt20, spt8, taf12, taf6, hfi1/ada1, ubp8, gcn5, ada2, spt3, sgf29, taf10, taf9, sgf11 and sus1. The SAGA complex is composed of 4 modules, namely the HAT (histone acetyltransferase) module (gcn5, ada2, ngg1/ada3 and sgf29), the DUB (deubiquitinating) module (ubp8, sgf11, sgf73 and sus1), the core or TAF (TBP-associated factor) module (taf5, taf6, taf9, taf10 and taf12), and the Tra1 or SPT (Suppressor of Ty) module (tra1, hfi1/ada1, spt3, spt7, spt8 and spt20). The Tra1/SPT module binds activators, the core module recruits TBP (TATA-binding protein), the HAT module contains the histone H3 acetyltransferase gcn5, and the DUB module comprises the histone H2B deubiquitinase ubp8.

The protein resides in the nucleus. Its subcellular location is the nucleoplasm. It catalyses the reaction Thiol-dependent hydrolysis of ester, thioester, amide, peptide and isopeptide bonds formed by the C-terminal Gly of ubiquitin (a 76-residue protein attached to proteins as an intracellular targeting signal).. Functionally, histone deubiquitinating enzyme component of the transcription coactivator SAGA complex. SAGA acts as a general cofactor required for essentially all RNA polymerase II transcription. At the promoters, SAGA is required for transcription pre-initiation complex (PIC) recruitment. It influences RNA polymerase II transcriptional activity through different activities such as TBP interaction (via core/TAF module) and promoter selectivity, interaction with transcription activators (via Tra1/SPT module), and chromatin modification through histone acetylation (via HAT module) and deubiquitination (via DUB module). SAGA preferentially acetylates histones H3 (to form H3K9ac, H3K14ac, H3K18ac and H3K23ac) and H2B and deubiquitinates histone H2B. SAGA interacts with DNA via upstream activating sequences (UASs). Within the DUB module, the correctly positioned zinc finger domains of sgf11 and sgf73 are both required to fully activate the ubiquitin hydrolase ubp8. The DUB module is also linked to the splicing efficiency of many transcripts. The polypeptide is Probable ubiquitin carboxyl-terminal hydrolase 8 (ubp8) (Schizosaccharomyces pombe (strain 972 / ATCC 24843) (Fission yeast)).